A 223-amino-acid polypeptide reads, in one-letter code: Phosphoribosylformylglycinamidine synthase subunit PurQ (223 aa).

The Glutamine amidotransferase type-1 domain occupies 3-223 (SAVVQLPGLN…FASALDVVAA (221 aa)). Cys86 functions as the Nucleophile in the catalytic mechanism. Active-site residues include His196 and Glu198.

Part of the FGAM synthase complex composed of 1 PurL, 1 PurQ and 2 PurS subunits.

The protein resides in the cytoplasm. The catalysed reaction is N(2)-formyl-N(1)-(5-phospho-beta-D-ribosyl)glycinamide + L-glutamine + ATP + H2O = 2-formamido-N(1)-(5-O-phospho-beta-D-ribosyl)acetamidine + L-glutamate + ADP + phosphate + H(+). The enzyme catalyses L-glutamine + H2O = L-glutamate + NH4(+). It participates in purine metabolism; IMP biosynthesis via de novo pathway; 5-amino-1-(5-phospho-D-ribosyl)imidazole from N(2)-formyl-N(1)-(5-phospho-D-ribosyl)glycinamide: step 1/2. In terms of biological role, part of the phosphoribosylformylglycinamidine synthase complex involved in the purines biosynthetic pathway. Catalyzes the ATP-dependent conversion of formylglycinamide ribonucleotide (FGAR) and glutamine to yield formylglycinamidine ribonucleotide (FGAM) and glutamate. The FGAM synthase complex is composed of three subunits. PurQ produces an ammonia molecule by converting glutamine to glutamate. PurL transfers the ammonia molecule to FGAR to form FGAM in an ATP-dependent manner. PurS interacts with PurQ and PurL and is thought to assist in the transfer of the ammonia molecule from PurQ to PurL. This is Phosphoribosylformylglycinamidine synthase subunit PurQ from Rhizobium etli (strain ATCC 51251 / DSM 11541 / JCM 21823 / NBRC 15573 / CFN 42).